Reading from the N-terminus, the 257-residue chain is Na(+)-translocating NADH-quinone reductase subunit C (257 aa).

A helical membrane pass occupies residues 13–33 (LTVVVLLSLICSLIVASAAVL). At threonine 224 the chain carries FMN phosphoryl threonine.

The protein belongs to the NqrC family. As to quaternary structure, composed of six subunits; NqrA, NqrB, NqrC, NqrD, NqrE and NqrF. It depends on FMN as a cofactor.

The protein resides in the cell inner membrane. It catalyses the reaction a ubiquinone + n Na(+)(in) + NADH + H(+) = a ubiquinol + n Na(+)(out) + NAD(+). In terms of biological role, NQR complex catalyzes the reduction of ubiquinone-1 to ubiquinol by two successive reactions, coupled with the transport of Na(+) ions from the cytoplasm to the periplasm. NqrA to NqrE are probably involved in the second step, the conversion of ubisemiquinone to ubiquinol. This chain is Na(+)-translocating NADH-quinone reductase subunit C, found in Haemophilus ducreyi (strain 35000HP / ATCC 700724).